Reading from the N-terminus, the 81-residue chain is Small ribosomal subunit protein bS16 (81 aa).

This sequence belongs to the bacterial ribosomal protein bS16 family.

The protein is Small ribosomal subunit protein bS16 of Lachnospira eligens (strain ATCC 27750 / DSM 3376 / VPI C15-48 / C15-B4) (Eubacterium eligens).